Consider the following 169-residue polypeptide: Cysteine synthase B (169 aa).

Lys45 bears the N6-(pyridoxal phosphate)lysine mark. Asn75 is a pyridoxal 5'-phosphate binding site. A disordered region spans residues 146–169; sequence ANGDNPEAHYTSTGPEIWRQTGGT.

This sequence belongs to the cysteine synthase/cystathionine beta-synthase family. It depends on pyridoxal 5'-phosphate as a cofactor.

The enzyme catalyses O-acetyl-L-serine + hydrogen sulfide = L-cysteine + acetate. The protein operates within amino-acid biosynthesis; L-cysteine biosynthesis; L-cysteine from L-serine: step 2/2. The sequence is that of Cysteine synthase B (cysM) from Pseudomonas syringae pv. syringae.